We begin with the raw amino-acid sequence, 306 residues long: D-alanine--D-alanine ligase (306 aa).

Residues 104–303 (KMLWKAFGLP…FEQLVVKILE (200 aa)) form the ATP-grasp domain. 134-189 (VAKLGLPLMVKPSLEGSSVGLTKVKAVEELKSAVEYALKFDNTILIEEWLAGDELT) contributes to the ATP binding site. Mg(2+) contacts are provided by Asp257, Glu270, and Asn272.

This sequence belongs to the D-alanine--D-alanine ligase family. Requires Mg(2+) as cofactor. It depends on Mn(2+) as a cofactor.

It localises to the cytoplasm. The enzyme catalyses 2 D-alanine + ATP = D-alanyl-D-alanine + ADP + phosphate + H(+). It participates in cell wall biogenesis; peptidoglycan biosynthesis. In terms of biological role, cell wall formation. This chain is D-alanine--D-alanine ligase, found in Haemophilus influenzae (strain PittGG).